We begin with the raw amino-acid sequence, 225 residues long: Glutathione S-transferase U3 (225 aa).

The GST N-terminal domain maps to 6 to 86 (EGVKLIGSWA…YIDQTWTNNP (81 aa)). Residues 16 to 17 (SP), 43 to 44 (VK), 57 to 58 (KV), and 70 to 71 (ES) contribute to the glutathione site. Residues 91 to 218 (SPYDKAMARF…EKHIEHMMKI (128 aa)) enclose the GST C-terminal domain. T152 bears the Phosphothreonine mark.

The protein belongs to the GST superfamily. Tau family.

It is found in the cytoplasm. The protein localises to the cytosol. The enzyme catalyses RX + glutathione = an S-substituted glutathione + a halide anion + H(+). Its function is as follows. May be involved in the conjugation of reduced glutathione to a wide number of exogenous and endogenous hydrophobic electrophiles and have a detoxification role against certain herbicides. This is Glutathione S-transferase U3 (GSTU3) from Arabidopsis thaliana (Mouse-ear cress).